The chain runs to 311 residues: Methionyl-tRNA formyltransferase (311 aa).

112-115 (SLLP) contacts (6S)-5,6,7,8-tetrahydrofolate.

The protein belongs to the Fmt family.

The enzyme catalyses L-methionyl-tRNA(fMet) + (6R)-10-formyltetrahydrofolate = N-formyl-L-methionyl-tRNA(fMet) + (6S)-5,6,7,8-tetrahydrofolate + H(+). Its function is as follows. Attaches a formyl group to the free amino group of methionyl-tRNA(fMet). The formyl group appears to play a dual role in the initiator identity of N-formylmethionyl-tRNA by promoting its recognition by IF2 and preventing the misappropriation of this tRNA by the elongation apparatus. The sequence is that of Methionyl-tRNA formyltransferase from Sinorhizobium fredii (strain NBRC 101917 / NGR234).